The primary structure comprises 65 residues: Large ribosomal subunit protein bL35 (65 aa).

The protein belongs to the bacterial ribosomal protein bL35 family.

This chain is Large ribosomal subunit protein bL35, found in Aeromonas hydrophila subsp. hydrophila (strain ATCC 7966 / DSM 30187 / BCRC 13018 / CCUG 14551 / JCM 1027 / KCTC 2358 / NCIMB 9240 / NCTC 8049).